Consider the following 395-residue polypeptide: MPGFELFGPEEKQEVADVMEHGFTFRYNFDHMRNDRWKTRDMEQLLCEKMNVKHAHLLSSGTAALQTAMMAAGIGAGDEVIVPPFTFVASVEAIFMAGAVPIFAEIDETLCLSPEGIEAVITPRTKAINLVHMCGSMAKMDEIKAICKKHNLVLLEDACQAIGGSYKGQALGTIGDVGCYSFDSVKTITCGEGGAVITNNTEIYDNAHMFSDHGHDHIGKDRGAESHPIMGLNFRISEMNAALGLAQLRKLDTIIDIQRKNKKAIKDAMASIPEVSFREIPDPEGDSAGFLSFMLPTEARTQEISKKLAANGVDGCFYWYVNNWHYLKNWKHIQELKAPAALPITLIADRPDYTQISVPKSDAIMSRTISMLIKLSWTDAQIAERIENIKKAFAQ.

Residue Lys186 is modified to N6-(pyridoxal phosphate)lysine.

This sequence belongs to the DegT/DnrJ/EryC1 family. Pyridoxal 5'-phosphate is required as a cofactor.

The enzyme catalyses 8-amino-3,8-dideoxy-alpha-D-manno-octulosonate + 2-oxoglutarate = 3,8-dideoxy-8-oxo-alpha-D-manno-octulosonate + L-glutamate. Its pathway is bacterial outer membrane biogenesis; lipopolysaccharide biosynthesis. In terms of biological role, catalyzes the second (last) step of the biosynthesis of Kdo8N (8-amino-3,8-dideoxy-D-manno-octulosonate) from Kdo (3-deoxy-D-manno-octulosonate). The protein is 8-amino-3,8-dideoxy-alpha-D-manno-octulosonate transaminase of Shewanella oneidensis (strain ATCC 700550 / JCM 31522 / CIP 106686 / LMG 19005 / NCIMB 14063 / MR-1).